The primary structure comprises 394 residues: Obg-like ATPase 1 (394 aa).

Residues 25–282 (LKIGIVGLPN…MPPDEAAKYC (258 aa)) enclose the OBG-type G domain. ATP-binding positions include 34–39 (NVGKST), 56–60 (FCTID), and 94–97 (DIAG). The Mg(2+) site is built by Ser38 and Thr58. Phe129 is a binding site for GTP. Residues 230-231 (NM), Met231, and 263-265 (SCA) contribute to the ATP site. 263 to 265 (SCA) contributes to the GTP binding site. One can recognise a TGS domain in the interval 303 to 386 (HLIYFFTAGP…QDADIIFFKF (84 aa)).

This sequence belongs to the TRAFAC class OBG-HflX-like GTPase superfamily. OBG GTPase family. YchF/OLA1 subfamily. Monomer (Potential). Interacts with GAP1. Mg(2+) serves as cofactor.

Its subcellular location is the cytoplasm. It localises to the cell membrane. The protein resides in the cytosol. Its activity is regulated as follows. Activated by GAP1. Its function is as follows. Hydrolyzes ATP, and can also hydrolyze GTP with lower efficiency. Has lower affinity for GTP (Potential). Exhibits GTPase activity. Exhibits similar binding affinities and hydrolytic activities toward both GTP and ATP. Binds to the 26 S ribosomal RNA in vitro, but not to the 5.8 S or 18 S rRNA. Confers sensitivity to salinity stress by suppressing the anti-oxidation enzymatic activities and increasing lipid peroxidation thus leading to the accumulation of reactive oxygen species (ROS). This is Obg-like ATPase 1 from Oryza sativa subsp. indica (Rice).